The chain runs to 370 residues: UDP-galactose transporter homolog 1 (370 aa).

Transmembrane regions (helical) follow at residues 22 to 42 (ALTL…WSIL), 62 to 82 (IIIN…YNYV), 115 to 135 (CNVL…SPIG), 145 to 165 (LAYL…HFIF), 175 to 195 (YLVA…HVTT), 204 to 224 (TLLG…TNST), 242 to 262 (LMSL…IIFH), 280 to 300 (LIDI…IFII), 307 to 327 (IILI…SVIL), and 333 to 353 (SWEQ…EAFI).

It belongs to the nucleotide-sugar transporter family. SLC35B subfamily.

The protein resides in the endoplasmic reticulum membrane. Its function is as follows. May be involved in specific transport of UDP-Gal from the cytosol to the Golgi lumen. Involved in the maintenance of optimal conditions for the folding of secretory pathway proteins in the endoplasmic reticulum. This is UDP-galactose transporter homolog 1 (HUT1) from Candida albicans (strain SC5314 / ATCC MYA-2876) (Yeast).